Here is a 197-residue protein sequence, read N- to C-terminus: Small ribosomal subunit protein uS4c (197 aa).

In terms of domain architecture, S4 RNA-binding spans 82–143 (MRLDNILFRL…KQRSKALIQN (62 aa)).

Belongs to the universal ribosomal protein uS4 family. Part of the 30S ribosomal subunit. Contacts protein S5. The interaction surface between S4 and S5 is involved in control of translational fidelity.

Its subcellular location is the plastid. It is found in the chloroplast. One of the primary rRNA binding proteins, it binds directly to 16S rRNA where it nucleates assembly of the body of the 30S subunit. In terms of biological role, with S5 and S12 plays an important role in translational accuracy. This Gladiolus papilio (Goldblotch gladiolus) protein is Small ribosomal subunit protein uS4c (rps4).